Reading from the N-terminus, the 179-residue chain is Avenin-like a2 (179 aa).

The first 19 residues, 1–19, serve as a signal peptide directing secretion; sequence MKTMFLLALLAFTATSAVA.

It belongs to the prolamin family. In terms of processing, contains 7 disulfide bonds.

Seed storage protein. Not integrated in the gluten polymer through disulfide bonds, unless incorporated by reduction and reoxidation during dough making. Increases dough strength and bread volume, but decreases dough stability when added into a base wheat flour. The chain is Avenin-like a2 from Triticum aestivum (Wheat).